Here is a 434-residue protein sequence, read N- to C-terminus: Histidine--tRNA ligase (434 aa).

The segment at D412 to V434 is disordered.

This sequence belongs to the class-II aminoacyl-tRNA synthetase family.

The protein resides in the cytoplasm. The catalysed reaction is tRNA(His) + L-histidine + ATP = L-histidyl-tRNA(His) + AMP + diphosphate + H(+). The chain is Histidine--tRNA ligase from Haloquadratum walsbyi (strain DSM 16790 / HBSQ001).